We begin with the raw amino-acid sequence, 840 residues long: Lethal(3)malignant brain tumor-like protein 1 (840 aa).

Phosphoserine is present on Ser117. The segment at 127 to 269 (EYEDGGAPAG…WSSSQPATGE (143 aa)) is disordered. Over residues 156 to 165 (PNQDPPEDDS) the composition is skewed to acidic residues. Residues 200 to 210 (VENSSGSTSAS) are compositionally biased toward polar residues. Positions 236-247 (AMEKQEEGKDPE) are enriched in basic and acidic residues. Polar residues predominate over residues 250-266 (PTASTPESEEWSSSQPA). 3 MBT repeats span residues 274-374 (WSWE…LQPP), 382-481 (FSWS…LTPP), and 490-585 (FCWE…LQPP). Residues 447 to 454 (FDNWDDTY) form an interaction with monomethylated and dimethylated peptides region. Positions 580 to 605 (HPLQPPLGPREPSSASPGGCPPLSYR) are disordered. The CCHHC-type zinc-finger motif lies at 613 to 656 (SKYSFHHRKCPTPGCDGSGHVTGKFTAHHCLSGCPLAERNQSRL). The Zn(2+) site is built by Cys622, Cys627, His640, and Cys646. The interval 657 to 697 (KAELSDSEASARKKNLSGFSPRKKPRHHGRIGRPPKYRKIP) is disordered. Residues 677-695 (PRKKPRHHGRIGRPPKYRK) show a composition bias toward basic residues.

In terms of assembly, homodimer. Interacts with RB1/RB (when monomethylated at 'Lys-860'). Interacts with p53/TP53 (when monomethylated at 'Lys-382'). Interacts with CBX3, ETV6, KMT5A and VCP/p97. In terms of processing, ubiquitinated in a VCP/p97-dependent way following DNA damage, leading to its removal from DNA damage sites, promoting accessibility of H4K20me2 mark for DNA repair protein TP53BP1, which is then recruited to DNA damage sites. In terms of tissue distribution, widely expressed. Expression is reduced in colorectal cancer cell line SW480 and promyelocytic leukemia cell line HL-60.

Its subcellular location is the nucleus. Functionally, polycomb group (PcG) protein that specifically recognizes and binds mono- and dimethyllysine residues on target proteins, thereby acting as a 'reader' of a network of post-translational modifications. PcG proteins maintain the transcriptionally repressive state of genes: acts as a chromatin compaction factor by recognizing and binding mono- and dimethylated histone H1b/H1-4 at 'Lys-26' (H1bK26me1 and H1bK26me2) and histone H4 at 'Lys-20' (H4K20me1 and H4K20me2), leading to condense chromatin and repress transcription. Recognizes and binds p53/TP53 monomethylated at 'Lys-382', leading to repress p53/TP53-target genes. Also recognizes and binds RB1/RB monomethylated at 'Lys-860'. Participates in the ETV6-mediated repression. Probably plays a role in cell proliferation. Overexpression induces multinucleated cells, suggesting that it is required to accomplish normal mitosis. The protein is Lethal(3)malignant brain tumor-like protein 1 (L3MBTL1) of Homo sapiens (Human).